The sequence spans 613 residues: Autophagy-related protein 22-2 (613 aa).

The tract at residues 1-28 (MVLNSTPPASPGAEAQQRPPRYPGEDTA) is disordered. The chain crosses the membrane as a helical span at residues 41–61 (YGIAAEVFAVCGVGSFLPLTL). A compositionally biased stretch (polar residues) spans 80–96 (GSSSPSTAPGNGTTTAT). The disordered stretch occupies residues 80–99 (GSSSPSTAPGNGTTTATLRR). Residue N90 is glycosylated (N-linked (GlcNAc...) asparagine). Helical transmembrane passes span 120–140 (SFAM…LISF), 155–177 (LAFG…PVYI), and 189–209 (CLGS…ANDP). Residues 216–257 (KEEGEELSPVNSSGEFARSEDLDEENVRDSDDHFTTGHGLKT) are disordered. N226 carries an N-linked (GlcNAc...) asparagine glycan. Positions 232 to 250 (ARSEDLDEENVRDSDDHFT) are enriched in basic and acidic residues. 4 helical membrane passes run 278–298 (VGLG…MLFA), 307–327 (ISGT…WFSF), 382–402 (VIVF…VSGT), and 418–438 (VGLL…LWPV). A glycan (N-linked (GlcNAc...) asparagine) is linked at N448. The next 4 helical transmembrane spans lie at 453 to 473 (LCIA…IPLF), 488 to 510 (FPLG…SFFG), 522 to 544 (YALY…GMLI), and 553 to 573 (GFFF…MVNA). Residues 592 to 613 (GEHASEYGGPSEEAEGLLARDI) are disordered.

This sequence belongs to the ATG22 family.

The protein localises to the vacuole membrane. In terms of biological role, vacuolar effluxer which mediate the efflux of amino acids resulting from autophagic degradation. The release of autophagic amino acids allows the maintenance of protein synthesis and viability during nitrogen starvation. The sequence is that of Autophagy-related protein 22-2 (atg22-2) from Neosartorya fischeri (strain ATCC 1020 / DSM 3700 / CBS 544.65 / FGSC A1164 / JCM 1740 / NRRL 181 / WB 181) (Aspergillus fischerianus).